The primary structure comprises 168 residues: G/U mismatch-specific DNA glycosylase (168 aa).

The protein belongs to the uracil-DNA glycosylase (UDG) superfamily. TDG/mug family. Binds DNA as a monomer.

The protein localises to the cytoplasm. The catalysed reaction is Specifically hydrolyzes mismatched double-stranded DNA and polynucleotides, releasing free uracil.. Its function is as follows. Excises ethenocytosine and uracil, which can arise by alkylation or deamination of cytosine, respectively, from the corresponding mispairs with guanine in ds-DNA. It is capable of hydrolyzing the carbon-nitrogen bond between the sugar-phosphate backbone of the DNA and the mispaired base. The complementary strand guanine functions in substrate recognition. Required for DNA damage lesion repair in stationary-phase cells. This Escherichia coli (strain SMS-3-5 / SECEC) protein is G/U mismatch-specific DNA glycosylase.